We begin with the raw amino-acid sequence, 233 residues long: Archaetidylserine synthase (233 aa).

The next 8 membrane-spanning stretches (helical) occupy residues 7–27, 29–49, 75–95, 102–122, 126–146, 147–167, 180–200, and 206–226; these read ITSF…SGYL, ILLS…LAVL, SLSD…SAAV, ILVG…FNVL, GKNF…SFYL, TGFY…VLMI, ASTA…VEIL, and VAGP…AVPI.

Belongs to the CDP-alcohol phosphatidyltransferase class-I family.

The protein localises to the membrane. It carries out the reaction CDP-2,3-bis-O-(geranylgeranyl)-sn-glycerol + L-serine = archaetidylserine + CMP + H(+). The enzyme catalyses CDP-2,3-bis-O-(phytanyl)-sn-glycerol + L-serine = 2,3-bis-O-phytanyl-sn-glycero-3-phospho-L-serine + CMP + H(+). The protein operates within membrane lipid metabolism; glycerophospholipid metabolism. With respect to regulation, activated by Mn(2+) ions. Its function is as follows. Involved in the lipid biosynthesis. Catalyzes the formation of unsaturated archaetidylserine from CDP-unsaturated archaeol and L-serine. Activity with ester-linked substrate analogs containing straight aliphatic chains (typical bacterial substrates) is two to three times higher than that with the corresponding ether-type substrate (typical archaeal substrates). Both enantiomers of CDP-unsaturated archaeols with ether-linked geranylgeranyl chains and CDP-saturated archaeol with ether-linked phytanyl chains are similarly active. The enzyme also accepts D-serine, although activity is only about third of that with L-serine. This chain is Archaetidylserine synthase, found in Methanothermobacter thermautotrophicus (strain ATCC 29096 / DSM 1053 / JCM 10044 / NBRC 100330 / Delta H) (Methanobacterium thermoautotrophicum).